Consider the following 598-residue polypeptide: Auxin response factor 22 (598 aa).

A DNA-binding region (TF-B3) is located at residues 124–226 (NSFTKVLTAS…ELRVGIRRAG (103 aa)). Residues 509 to 590 (RTCTKVQMQG…MVKKILIFKR (82 aa)) enclose the PB1 domain.

Belongs to the ARF family. As to quaternary structure, homodimers and heterodimers.

It localises to the nucleus. Auxin response factors (ARFs) are transcriptional factors that bind specifically to the DNA sequence 5'-TGTCTC-3' found in the auxin-responsive promoter elements (AuxREs). Could act as transcriptional activator or repressor. Formation of heterodimers with Aux/IAA proteins may alter their ability to modulate early auxin response genes expression. The sequence is that of Auxin response factor 22 (ARF22) from Arabidopsis thaliana (Mouse-ear cress).